The primary structure comprises 205 residues: Ribosomal RNA small subunit methyltransferase G (205 aa).

S-adenosyl-L-methionine-binding positions include Gly-66, Phe-71, 119–120, and Arg-135; that span reads IE.

The protein belongs to the methyltransferase superfamily. RNA methyltransferase RsmG family.

Its subcellular location is the cytoplasm. It catalyses the reaction guanosine(527) in 16S rRNA + S-adenosyl-L-methionine = N(7)-methylguanosine(527) in 16S rRNA + S-adenosyl-L-homocysteine. Its function is as follows. Specifically methylates the N7 position of guanine in position 527 of 16S rRNA. This Rhizobium etli (strain CIAT 652) protein is Ribosomal RNA small subunit methyltransferase G.